A 149-amino-acid polypeptide reads, in one-letter code: Transcriptional regulator MraZ (149 aa).

SpoVT-AbrB domains are found at residues 9 to 52 (AYSY…PRAQ) and 82 to 125 (AQEV…DRAR).

It belongs to the MraZ family. In terms of assembly, forms oligomers.

Its subcellular location is the cytoplasm. The protein localises to the nucleoid. The protein is Transcriptional regulator MraZ of Treponema pallidum subsp. pallidum (strain SS14).